The primary structure comprises 89 residues: Small ribosomal subunit protein uS15 (89 aa).

Belongs to the universal ribosomal protein uS15 family. Part of the 30S ribosomal subunit. Forms a bridge to the 50S subunit in the 70S ribosome, contacting the 23S rRNA.

One of the primary rRNA binding proteins, it binds directly to 16S rRNA where it helps nucleate assembly of the platform of the 30S subunit by binding and bridging several RNA helices of the 16S rRNA. In terms of biological role, forms an intersubunit bridge (bridge B4) with the 23S rRNA of the 50S subunit in the ribosome. The chain is Small ribosomal subunit protein uS15 from Micrococcus luteus (strain ATCC 4698 / DSM 20030 / JCM 1464 / CCM 169 / CCUG 5858 / IAM 1056 / NBRC 3333 / NCIMB 9278 / NCTC 2665 / VKM Ac-2230) (Micrococcus lysodeikticus).